Reading from the N-terminus, the 379-residue chain is Cell division protein FtsZ (379 aa).

GTP is bound by residues 18–22 (GGGVN), 105–107 (GTG), E136, R140, and D184.

This sequence belongs to the FtsZ family. Homodimer. Polymerizes to form a dynamic ring structure in a strictly GTP-dependent manner. Interacts directly with several other division proteins.

Its subcellular location is the cytoplasm. Essential cell division protein that forms a contractile ring structure (Z ring) at the future cell division site. The regulation of the ring assembly controls the timing and the location of cell division. One of the functions of the FtsZ ring is to recruit other cell division proteins to the septum to produce a new cell wall between the dividing cells. Binds GTP and shows GTPase activity. This Mycobacterium leprae (strain TN) protein is Cell division protein FtsZ.